Reading from the N-terminus, the 249-residue chain is Probable septum site-determining protein MinC (249 aa).

Residues Lys-115–Ala-141 form a disordered region. Residues Gln-118–Ala-141 are compositionally biased toward low complexity.

The protein belongs to the MinC family. Interacts with MinD and FtsZ.

Its function is as follows. Cell division inhibitor that blocks the formation of polar Z ring septums. Rapidly oscillates between the poles of the cell to destabilize FtsZ filaments that have formed before they mature into polar Z rings. Prevents FtsZ polymerization. The protein is Probable septum site-determining protein MinC of Marinobacter nauticus (strain ATCC 700491 / DSM 11845 / VT8) (Marinobacter aquaeolei).